The sequence spans 674 residues: MTLVEVKDDKLEIKPVRLRKEKYKTQLKNKIFNEDDLYLFHEGRNYNAYNFMGAHFTSENRKRGVRFTLWAPRAKNIFLVGDFSNWETKEENKLERINETGLWSIFIPRLKEGIKYKYYIEQEDGKAVLKADPYGIYSEVRPNTASILCEKTKIRWSDKKWLNKREETNYFESPINIYELHLGSWKRKDEDEFLSYDELSIILPKYIKEMGYTHVEFMPLNEHPLDASWGYQVTGYYSITSRYGDIKGLKRLINALHKEDIGVILDWVPGHFCKDEQGLYMFDGTPTYEYEEKWKADNKGWGTFNFDLGKPEVKSFLISNAFYFINEFHIDGLRVDAVSNMLYLNYGRNHGEWVPNIYGGNENLEAIQFIKELNEAIKTYSKGVITIAEESTSWPNVTNDTEYGGLGFDFKWNMGWMNDTLEYNELDPIYRKYHHNKLTFPMMYNHSEKFILPISHDEVVHGKKSLIDKMQGDYWNKLANLRAYMAYMYGHPGKKLMFMGCEFGQFIEWREYEELEWKLIDKFDMHRKTHNFFKDLNNFYKNNSELWELDYDQDGFQWIDADNNEQSIYIFIRKSKNIEKYKIFVCNFTPMVYYDFNIGVPEKGVYREIFNTDKEEYGGSGQVIKGNLFSRKGWCHNQQYTLTIKVPPMAVSVFERIIEENKTEEKIVKEDKYI.

Aspartate 336 (nucleophile) is an active-site residue. Glutamate 389 acts as the Proton donor in catalysis.

This sequence belongs to the glycosyl hydrolase 13 family. GlgB subfamily. As to quaternary structure, monomer.

The catalysed reaction is Transfers a segment of a (1-&gt;4)-alpha-D-glucan chain to a primary hydroxy group in a similar glucan chain.. The protein operates within glycan biosynthesis; glycogen biosynthesis. Functionally, catalyzes the formation of the alpha-1,6-glucosidic linkages in glycogen by scission of a 1,4-alpha-linked oligosaccharide from growing alpha-1,4-glucan chains and the subsequent attachment of the oligosaccharide to the alpha-1,6 position. The polypeptide is 1,4-alpha-glucan branching enzyme GlgB 1 (glgB1) (Clostridium perfringens (strain 13 / Type A)).